We begin with the raw amino-acid sequence, 665 residues long: Soluble lamin-associated protein of 75 kDa (665 aa).

Positions 309–665 (AFASTSEGPE…GPGKKKAKLT (357 aa)) are disordered. Residues 311–326 (ASTSEGPEKTPVSTRT) show a composition bias toward polar residues. The segment covering 327 to 338 (RSSHLKRPKIGK) has biased composition (basic residues). Phosphoserine occurs at positions 348 and 377. Positions 376-397 (SSEEFLEEEPEQGVIDFEDESG) are enriched in acidic residues. Residues 412–421 (QKQDGDKDSA) show a composition bias toward basic and acidic residues. The segment covering 440–451 (TEDEDSTSEGLE) has biased composition (acidic residues). Residues S447 and S512 each carry the phosphoserine modification. Composition is skewed to polar residues over residues 521–533 (LGSS…VSNI) and 553–566 (VSQN…SSVE). Phosphoserine is present on residues S610, S613, and S630. A compositionally biased stretch (basic residues) spans 646 to 665 (NLRRKAKGHKGPGKKKAKLT).

This sequence belongs to the FAM169 family.

It localises to the nucleus envelope. Its subcellular location is the nucleus inner membrane. The sequence is that of Soluble lamin-associated protein of 75 kDa (Fam169a) from Mus musculus (Mouse).